The primary structure comprises 243 residues: Calcium-binding protein LPS1-beta (243 aa).

EF-hand domains follow at residues 15–49, 47–82, 85–120, 121–156, 157–189, 191–226, and 227–243; these read EVID…DCPE, CPEE…YTKE, YSSD…ISTK, LVEG…KLPL, CFKK…NLPG, YSEE…LSKD, and DIKN…NGKI. Residues aspartate 29, asparagine 31, aspartate 33, threonine 35, glutamate 40, aspartate 60, asparagine 62, aspartate 64, arginine 66, glutamate 71, aspartate 98, aspartate 100, asparagine 102, arginine 104, glutamate 109, aspartate 134, aspartate 136, aspartate 138, histidine 140, glutamate 145, aspartate 167, asparagine 169, aspartate 171, serine 173, glutamate 178, aspartate 204, asparagine 206, aspartate 208, arginine 210, and glutamate 215 each contribute to the Ca(2+) site.

As to expression, aboral ectoderm, a squamous epithelium covering the surface of the late stage embryo and larva.

Functionally, calcium-binding protein involved in larval development and metamorphosis. Likely to function as calcium buffers mediating the transport of calcium from the sea water to the blastocoel where calcium is required for skeleton formation. This chain is Calcium-binding protein LPS1-beta, found in Lytechinus pictus (Painted sea urchin).